Reading from the N-terminus, the 231-residue chain is Large ribosomal subunit protein uL1 (231 aa).

It belongs to the universal ribosomal protein uL1 family. In terms of assembly, part of the 50S ribosomal subunit.

Functionally, binds directly to 23S rRNA. The L1 stalk is quite mobile in the ribosome, and is involved in E site tRNA release. Protein L1 is also a translational repressor protein, it controls the translation of the L11 operon by binding to its mRNA. The protein is Large ribosomal subunit protein uL1 of Clostridium kluyveri (strain NBRC 12016).